Here is a 316-residue protein sequence, read N- to C-terminus: L-lactate dehydrogenase (316 aa).

Residues V15, D37, K42, Y68, and 82–83 each bind NAD(+); that span reads GL. Substrate is bound by residues Q85, R91, and 123–126; that span reads NPVD. NAD(+) is bound by residues 121-123 and T146; that span reads ASN. Residue 151–154 participates in substrate binding; sequence DTSR. Beta-D-fructose 1,6-bisphosphate-binding residues include R156 and H171. The active-site Proton acceptor is the H178. Y222 is modified (phosphotyrosine). T231 is a binding site for substrate.

Belongs to the LDH/MDH superfamily. LDH family. Homotetramer.

It localises to the cytoplasm. The catalysed reaction is (S)-lactate + NAD(+) = pyruvate + NADH + H(+). It participates in fermentation; pyruvate fermentation to lactate; (S)-lactate from pyruvate: step 1/1. Allosterically activated by fructose 1,6-bisphosphate (FBP). Its function is as follows. Catalyzes the conversion of lactate to pyruvate. The polypeptide is L-lactate dehydrogenase (Borrelia turicatae (strain 91E135)).